A 1079-amino-acid polypeptide reads, in one-letter code: Ubiquitin carboxyl-terminal hydrolase 26 (1079 aa).

The span at 1–12 shows a compositional bias: basic residues; that stretch reads MSRPNTRNKSKR. The tract at residues 1–21 is disordered; the sequence is MSRPNTRNKSKRPRADDCESP. In terms of domain architecture, USP spans 106–446; sequence AGLTNLGATC…DAYMLMYKRI (341 aa). The active-site Nucleophile is Cys-115. His-359 acts as the Proton acceptor in catalysis. A disordered region spans residues 384–419; that stretch reads GLHPFGEKPGKSSDKTDQKPQGSSTADSVTNDDNNS. Over residues 388-401 the composition is skewed to basic and acidic residues; sequence FGEKPGKSSDKTDQ. Over residues 402–417 the composition is skewed to polar residues; that stretch reads KPQGSSTADSVTNDDN. 3 DUSP domains span residues 495-598, 613-715, and 738-862; these read AYIT…DDFC, DVYR…FPSD, and AVKL…AEIV. The interval 948–972 is disordered; sequence EASAAVPVPDRRTSKRSRRTTSGNS. The 77-residue stretch at 961 to 1037 folds into the Ubiquitin-like domain; sequence SKRSRRTTSG…LWVKDSEIYE (77 aa).

Belongs to the peptidase C19 family.

It is found in the nucleus. It catalyses the reaction Thiol-dependent hydrolysis of ester, thioester, amide, peptide and isopeptide bonds formed by the C-terminal Gly of ubiquitin (a 76-residue protein attached to proteins as an intracellular targeting signal).. In terms of biological role, recognizes and hydrolyzes the peptide bond at the C-terminal Gly of ubiquitin. Involved in the processing of poly-ubiquitin precursors as well as that of ubiquitinated proteins. Deubiquitinates H2BK143ub1 of histone H2B. This Oryza sativa subsp. japonica (Rice) protein is Ubiquitin carboxyl-terminal hydrolase 26 (UBP26).